The chain runs to 362 residues: Glutaminase-asparaginase (362 aa).

A signal peptide spans 1-25 (MNAALKTFAPSALALLLILPSSASA). Residues 35-362 (ANVVILATGG…KELQRIFWEY (328 aa)) form the Asparaginase/glutaminase domain. Catalysis depends on threonine 45, which acts as the Acyl-ester intermediate. Residues serine 92 and 125–126 (TD) each bind substrate.

Belongs to the asparaginase 1 family. Homotetramer.

The protein resides in the periplasm. The enzyme catalyses L-glutamine + H2O = L-glutamate + NH4(+). It catalyses the reaction L-asparagine + H2O = L-aspartate + NH4(+). The sequence is that of Glutaminase-asparaginase (ansB) from Pseudomonas putida (strain ATCC 47054 / DSM 6125 / CFBP 8728 / NCIMB 11950 / KT2440).